The following is a 184-amino-acid chain: Protein MEH1 (184 aa).

Residue glycine 2 is the site of N-myristoyl glycine attachment. S-palmitoyl cysteine attachment occurs at residues cysteine 7 and cysteine 8. Residues 30–71 adopt a coiled-coil conformation; that stretch reads QGNANDEYDAEQMRLKEHEHEQKLLAREQELRDIVANTNDKL. The disordered stretch occupies residues 89 to 147; it reads LQEALDKRQQEEGGDSREDERSAGDDNLSGHSVPSSGSAQATTHQTAPRTNTFTLLTSP. Basic and acidic residues predominate over residues 92-112; it reads ALDKRQQEEGGDSREDERSAG. Positions 117-147 are enriched in polar residues; sequence SGHSVPSSGSAQATTHQTAPRTNTFTLLTSP. Phosphoserine occurs at positions 146 and 149.

As to quaternary structure, component of the GSE complex composed of GTR1, GTR2, SLM4, MEH1 and LTV1. Component of the EGO complex, at least composed of GTR2, SLM4 and MEH1.

The protein resides in the vacuole membrane. Component of the GSE complex, a GTPase complex required for intracellular sorting of GAP1 out of the endosome. Component of the EGO complex, a complex involved in the regulation of microautophagy. The protein is Protein MEH1 (MEH1) of Saccharomyces cerevisiae (strain ATCC 204508 / S288c) (Baker's yeast).